A 483-amino-acid polypeptide reads, in one-letter code: Glutamyl-tRNA(Gln) amidotransferase subunit A (483 aa).

Catalysis depends on charge relay system residues Lys76 and Ser151. The active-site Acyl-ester intermediate is Ser175.

The protein belongs to the amidase family. GatA subfamily. In terms of assembly, heterotrimer of A, B and C subunits.

The catalysed reaction is L-glutamyl-tRNA(Gln) + L-glutamine + ATP + H2O = L-glutaminyl-tRNA(Gln) + L-glutamate + ADP + phosphate + H(+). Allows the formation of correctly charged Gln-tRNA(Gln) through the transamidation of misacylated Glu-tRNA(Gln) in organisms which lack glutaminyl-tRNA synthetase. The reaction takes place in the presence of glutamine and ATP through an activated gamma-phospho-Glu-tRNA(Gln). This Coxiella burnetii (strain CbuK_Q154) (Coxiella burnetii (strain Q154)) protein is Glutamyl-tRNA(Gln) amidotransferase subunit A.